An 89-amino-acid polypeptide reads, in one-letter code: Small ribosomal subunit protein uS14A (89 aa).

The protein belongs to the universal ribosomal protein uS14 family. In terms of assembly, part of the 30S ribosomal subunit. Contacts proteins S3 and S10.

Binds 16S rRNA, required for the assembly of 30S particles and may also be responsible for determining the conformation of the 16S rRNA at the A site. This is Small ribosomal subunit protein uS14A from Streptococcus equi subsp. zooepidemicus (strain MGCS10565).